Here is a 672-residue protein sequence, read N- to C-terminus: DNA ligase (672 aa).

NAD(+) contacts are provided by residues 32–36 (DAEYD), 81–82 (SL), and glutamate 113. The active-site N6-AMP-lysine intermediate is lysine 115. NAD(+)-binding residues include arginine 136, glutamate 173, lysine 290, and lysine 314. 4 residues coordinate Zn(2+): cysteine 408, cysteine 411, cysteine 426, and cysteine 432. In terms of domain architecture, BRCT spans 592–672 (EIDSPFAGKT…EMIRLLGESS (81 aa)).

This sequence belongs to the NAD-dependent DNA ligase family. LigA subfamily. It depends on Mg(2+) as a cofactor. The cofactor is Mn(2+).

The catalysed reaction is NAD(+) + (deoxyribonucleotide)n-3'-hydroxyl + 5'-phospho-(deoxyribonucleotide)m = (deoxyribonucleotide)n+m + AMP + beta-nicotinamide D-nucleotide.. In terms of biological role, DNA ligase that catalyzes the formation of phosphodiester linkages between 5'-phosphoryl and 3'-hydroxyl groups in double-stranded DNA using NAD as a coenzyme and as the energy source for the reaction. It is essential for DNA replication and repair of damaged DNA. The chain is DNA ligase from Yersinia enterocolitica serotype O:8 / biotype 1B (strain NCTC 13174 / 8081).